The sequence spans 88 residues: Small ribosomal subunit protein bS16c (88 aa).

It belongs to the bacterial ribosomal protein bS16 family.

The protein localises to the plastid. It is found in the chloroplast. The sequence is that of Small ribosomal subunit protein bS16c from Gossypium barbadense (Sea Island cotton).